The following is a 384-amino-acid chain: Urea transporter 1 (384 aa).

5 helical membrane passes run 61–81, 85–105, 111–131, 138–158, and 168–188; these read ISQVVFVSNPISGILILAGLL, PWWALCGCVGTVVSTLTALLL, AIAAGLQGYNATLVGILMAVF, FWWLIFPVSAMSMTCPVFSSA, and LPVFTLPFNMALSLYLSATGH. N-linked (GlcNAc...) asparagine glycosylation occurs at Asn-206. The next 4 helical transmembrane spans lie at 250–270, 279–299, 305–325, and 327–347; these read LMCLHAAIGSLLGVIAGLSLA, GLWGFNSSLACIAIGGMFMAL, LLALACALFTAYFGACMTHLM, and AVHLPACTWSFCLATLLFLLL.

Belongs to the urea transporter family. Homotrimer; each subunit contains a pore through which urea permeates. Identified in a complex with STOM. In terms of tissue distribution, expressed in brain, spleen, kidney, testis and lung, with highest levels in brain.

Its subcellular location is the cell membrane. It is found in the basolateral cell membrane. The enzyme catalyses urea(in) = urea(out). Its function is as follows. Mediates the transport of urea driven by a concentration gradient across the cell membrane. Mediates the transport of urea across the cell membranes of erythrocytes and the renal inner medullary collecting duct which is critical to the urinary concentrating mechanism. Facilitates water transport in erythrocytes. The sequence is that of Urea transporter 1 (Slc14a1) from Rattus norvegicus (Rat).